The sequence spans 60 residues: MAVPKRKTSPSKRGMRRSADALKAPTYVEDKNSGEMRRPHHIDLKTGMYRGRQVLTPKES.

The segment covering 1-16 (MAVPKRKTSPSKRGMR) has biased composition (basic residues). Positions 1–60 (MAVPKRKTSPSKRGMRRSADALKAPTYVEDKNSGEMRRPHHIDLKTGMYRGRQVLTPKES) are disordered. Over residues 28–44 (VEDKNSGEMRRPHHIDL) the composition is skewed to basic and acidic residues.

This sequence belongs to the bacterial ribosomal protein bL32 family.

The polypeptide is Large ribosomal subunit protein bL32 (Mesorhizobium japonicum (strain LMG 29417 / CECT 9101 / MAFF 303099) (Mesorhizobium loti (strain MAFF 303099))).